Consider the following 419-residue polypeptide: uncharacterized protein (419 aa).

A run of 13 helical transmembrane segments spans residues methionine 5–isoleucine 25, alanine 26–isoleucine 46, phenylalanine 53–leucine 73, valine 102–isoleucine 122, valine 144–valine 164, phenylalanine 170–phenylalanine 190, alanine 210–leucine 230, leucine 234–leucine 254, alanine 274–phenylalanine 294, isoleucine 309–proline 329, methionine 332–leucine 352, methionine 360–isoleucine 380, and leucine 396–leucine 416.

The protein belongs to the YiaN/YgiK family.

Its subcellular location is the cell inner membrane. This is an uncharacterized protein from Sinorhizobium fredii (strain NBRC 101917 / NGR234).